A 147-amino-acid chain; its full sequence is Large ribosomal subunit protein uL16 (147 aa).

A compositionally biased stretch (basic residues) spans methionine 1–arginine 16. The tract at residues methionine 1–glutamine 20 is disordered.

Belongs to the universal ribosomal protein uL16 family. Part of the 50S ribosomal subunit.

Functionally, binds 23S rRNA and is also seen to make contacts with the A and possibly P site tRNAs. The sequence is that of Large ribosomal subunit protein uL16 from Alkaliphilus metalliredigens (strain QYMF).